The primary structure comprises 374 residues: MEPDRQTDIAALDSTLTTVERVLDVEGLRTRIEKLEHEASDPKLWDDQVRAQRVTSELSHAQGELRRIEELRRRLDDLPVLYELAAEERAAAAASGMEAFAEADAELKALRVDIEATEVRTLLSGEYDEREALITIRSGAGGVDAADWAEMLMRMYIRWAEQHKYGVEVLDTSYAEEAGVKSATFAVHAPFAYGTLASEQGTHRLVRISPFDNQSRRQTSFAEVEVLPVVEITDHIDIPEGDVRVDVYRSSGPGGQSVNTTDSAVRLTHVPTGLVVTCQNEKSQLQNKVSAMRVLQAKLLERKRLEERAELDALKGRGGSSWGNQIRSYVLHPYQMVKDLRNEYEVGNPTAVLDGDIDGFLEAGIRWRNRRDIS.

An N5-methylglutamine modification is found at glutamine 256.

This sequence belongs to the prokaryotic/mitochondrial release factor family. Methylated by PrmC. Methylation increases the termination efficiency of RF2.

It localises to the cytoplasm. Peptide chain release factor 2 directs the termination of translation in response to the peptide chain termination codons UGA and UAA. This chain is Peptide chain release factor 2, found in Mycobacterium leprae (strain Br4923).